Reading from the N-terminus, the 147-residue chain is TRAF-interacting protein with FHA domain-containing protein B (147 aa).

Residues 36–108 form the FHA domain; that stretch reads LLVGRGQDTH…LHSVNRISFS (73 aa).

In terms of assembly, interacts with TIFA.

Inhibits TIFA-mediated TRAF6 activation possibly by inducing a conformational change in TIFA. The sequence is that of TRAF-interacting protein with FHA domain-containing protein B from Rattus norvegicus (Rat).